Reading from the N-terminus, the 102-residue chain is Small ribosomal subunit protein uS10 (102 aa).

Belongs to the universal ribosomal protein uS10 family. As to quaternary structure, part of the 30S ribosomal subunit.

Its function is as follows. Involved in the binding of tRNA to the ribosomes. In Dehalococcoides mccartyi (strain ATCC BAA-2100 / JCM 16839 / KCTC 5957 / BAV1), this protein is Small ribosomal subunit protein uS10.